The sequence spans 117 residues: UPF0295 protein RBAM_008830 (117 aa).

The next 2 helical transmembrane spans lie at 13-33 and 41-61; these read TFAL…LFFK and LFMI…FWIG.

This sequence belongs to the UPF0295 family.

Its subcellular location is the cell membrane. The chain is UPF0295 protein RBAM_008830 from Bacillus velezensis (strain DSM 23117 / BGSC 10A6 / LMG 26770 / FZB42) (Bacillus amyloliquefaciens subsp. plantarum).